Consider the following 329-residue polypeptide: GTP 3',8-cyclase (329 aa).

In terms of domain architecture, Radical SAM core spans 1 to 229 (MNPVDYLRIS…TAFVQGNGPA (229 aa)). GTP is bound at residue R8. [4Fe-4S] cluster contacts are provided by C15 and C19. Y21 contributes to the S-adenosyl-L-methionine binding site. C22 is a [4Fe-4S] cluster binding site. R60 provides a ligand contact to GTP. Residue G64 participates in S-adenosyl-L-methionine binding. T91 contributes to the GTP binding site. S115 contributes to the S-adenosyl-L-methionine binding site. K155 is a binding site for GTP. M189 lines the S-adenosyl-L-methionine pocket. 2 residues coordinate [4Fe-4S] cluster: C252 and C255. 257–259 (RMR) is a binding site for GTP. C269 is a [4Fe-4S] cluster binding site.

It belongs to the radical SAM superfamily. MoaA family. In terms of assembly, monomer and homodimer. It depends on [4Fe-4S] cluster as a cofactor.

It carries out the reaction GTP + AH2 + S-adenosyl-L-methionine = (8S)-3',8-cyclo-7,8-dihydroguanosine 5'-triphosphate + 5'-deoxyadenosine + L-methionine + A + H(+). Its pathway is cofactor biosynthesis; molybdopterin biosynthesis. Functionally, catalyzes the cyclization of GTP to (8S)-3',8-cyclo-7,8-dihydroguanosine 5'-triphosphate. This is GTP 3',8-cyclase from Picosynechococcus sp. (strain ATCC 27264 / PCC 7002 / PR-6) (Agmenellum quadruplicatum).